A 90-amino-acid chain; its full sequence is Small ribosomal subunit protein bS16 (90 aa).

The protein belongs to the bacterial ribosomal protein bS16 family.

The polypeptide is Small ribosomal subunit protein bS16 (Listeria innocua serovar 6a (strain ATCC BAA-680 / CLIP 11262)).